We begin with the raw amino-acid sequence, 571 residues long: PHD and RING finger domain-containing protein C126.07c (571 aa).

The RING-type 1; atypical zinc finger occupies 18 to 79 (CIICLSNLPN…RVANTCPLCR (62 aa)). The PHD-type zinc finger occupies 122–170 (TCRCVICGRSDHAEVLLLCDGCDDAYHTYCLNMDAVPIEEFYCPNCVLL). The segment at 125–168 (CVICGRSDHAEVLLLCDGCDDAYHTYCLNMDAVPIEEFYCPNCV) adopts an RING-type 2; degenerate zinc-finger fold. Positions 305–324 (ATEATISNPRPSSGRFQQTP) are enriched in polar residues. The interval 305-377 (ATEATISNPR…VLGNNSSSKS (73 aa)) is disordered. Over residues 346–356 (RRQKRPTRRHI) the composition is skewed to basic residues. The segment covering 359-377 (SNKSSGSSTVLGNNSSSKS) has biased composition (polar residues).

It is found in the cytoplasm. It localises to the nucleus. The chain is PHD and RING finger domain-containing protein C126.07c from Schizosaccharomyces pombe (strain 972 / ATCC 24843) (Fission yeast).